The chain runs to 130 residues: Ribonuclease P protein component (130 aa).

This sequence belongs to the RnpA family. In terms of assembly, consists of a catalytic RNA component (M1 or rnpB) and a protein subunit.

The catalysed reaction is Endonucleolytic cleavage of RNA, removing 5'-extranucleotides from tRNA precursor.. In terms of biological role, RNaseP catalyzes the removal of the 5'-leader sequence from pre-tRNA to produce the mature 5'-terminus. It can also cleave other RNA substrates such as 4.5S RNA. The protein component plays an auxiliary but essential role in vivo by binding to the 5'-leader sequence and broadening the substrate specificity of the ribozyme. This Psychrobacter sp. (strain PRwf-1) protein is Ribonuclease P protein component.